Consider the following 88-residue polypeptide: Small ribosomal subunit protein bS20 (88 aa).

Residues 1-20 (MANIKQQKKRNKTNEKRRLR) are disordered.

This sequence belongs to the bacterial ribosomal protein bS20 family.

Binds directly to 16S ribosomal RNA. In Phytoplasma australiense, this protein is Small ribosomal subunit protein bS20.